The sequence spans 1498 residues: Rap guanine nucleotide exchange factor 2 (1498 aa).

2 disordered regions span residues 40-59 (HVSS…SSSL) and 68-101 (SEAG…SDPL). Residues 83–94 (VDSEDDDDEEDI) are compositionally biased toward acidic residues. 135–252 (AFANMTMSVR…QKVEEEGEIV (118 aa)) contributes to the a nucleoside 3',5'-cyclic phosphate binding site. Residues 267–380 (KGHIVIKGTS…RLLNIACAAK (114 aa)) form the N-terminal Ras-GEF domain. The 84-residue stretch at 385 to 468 (LMTLTKPSRE…LSITVKTNLF (84 aa)) folds into the PDZ domain. Ser501 is modified (phosphoserine). One can recognise a Ras-associating domain in the interval 606 to 692 (PDQVLRVFKA…GRYYLKNNME (87 aa)). Phosphothreonine is present on Thr644. A Ras-GEF domain is found at 717–944 (STVEVATQLS…SQGSTNATVL (228 aa)). Ser806, Ser930, Ser933, Ser1022, Ser1079, Ser1088, Ser1094, Ser1115, Ser1119, Ser1158, and Ser1175 each carry phosphoserine. Residues 1002–1048 (PATNTLPKNPGDKKPVKSETSPVAPRAGSQQKAQAQPPPPQPQPQHK) form a disordered region. The disordered stretch occupies residues 1094–1159 (SLERHKKQAE…RSSIVSNSSF (66 aa)). Composition is skewed to low complexity over residues 1110 to 1124 (SSQL…QSSP) and 1140 to 1159 (SDSG…NSSF). Disordered regions lie at residues 1224-1257 (STEE…GSHD), 1304-1371 (TKYN…TKPV), and 1392-1498 (EGRY…VSAV). Polar residues-rich tracts occupy residues 1246–1257 (GSWTSCSSGSHD) and 1306–1330 (YNRQ…SSTG). Residues 1354–1365 (EAESSSVTSVTT) are compositionally biased toward low complexity. Residues 1487–1498 (TEEDEDEQVSAV) show a composition bias toward acidic residues.

The protein belongs to the RAPGEF2 family. In terms of assembly, found in a complex, at least composed of KIDINS220, MAGI2, NTRK1 and RAPGEF2; the complex is mainly formed at late endosomes in a neuronal growth factor (NGF)-dependent manner. Interacts (via C-terminal domain) with NEDD4 (via WW domains); this interaction leads to ubiquitination and degradation via the proteasome pathway in a cAMP-independent manner. Interacts with MAGI1 (via PDZ domain). Interacts with ADRB1 (via C-terminal PDZ motif); the interaction is direct. Interacts (via Ras-associating domain) with RAP1A (via GTP-bound active form). Interacts weakly with HRAS (via GDP- and GTP-bound forms). Interacts (via C-terminal domain) with MAGI2 (via PDZ and WW domains). Interacts with CDH1, CTNNB1 and TJP1. Post-translationally, ubiquitinated by NEDD4, leading to proteasomal degradation. Phosphorylation by PLK2 promotes its activity.

It is found in the cell junction. The protein localises to the cytoplasm. The protein resides in the perinuclear region. It localises to the cell membrane. Its subcellular location is the late endosome. Its function is as follows. Functions as a guanine nucleotide exchange factor (GEF), which activates Rap and Ras family of small GTPases by exchanging bound GDP for free GTP in a cAMP-dependent manner. Serves as a link between cell surface receptors and Rap/Ras GTPases in intracellular signaling cascades. Also acts as an effector for Rap1 by direct association with Rap1-GTP thereby leading to the amplification of Rap1-mediated signaling. Shows weak activity on HRAS. It is controversial whether RAPGEF2 binds cAMP and cGMP or not. Its binding to ligand-activated beta-1 adrenergic receptor ADRB1 leads to the Ras activation through the G(s)-alpha signaling pathway. Involved in the cAMP-induced Ras and Erk1/2 signaling pathway that leads to sustained inhibition of long term melanogenesis by reducing dendrite extension and melanin synthesis. Also provides inhibitory signals for cell proliferation of melanoma cells and promotes their apoptosis in a cAMP-independent nanner. Regulates cAMP-induced neuritogenesis by mediating the Rap1/B-Raf/ERK signaling through a pathway that is independent on both PKA and RAPGEF3/RAPGEF4. Involved in neuron migration and in the formation of the major forebrain fiber connections forming the corpus callosum, the anterior commissure and the hippocampal commissure during brain development. Involved in neuronal growth factor (NGF)-induced sustained activation of Rap1 at late endosomes and in brain-derived neurotrophic factor (BDNF)-induced axon outgrowth of hippocampal neurons. Plays a role in the regulation of embryonic blood vessel formation and in the establishment of basal junction integrity and endothelial barrier function. May be involved in the regulation of the vascular endothelial growth factor receptor KDR and cadherin CDH5 expression at allantois endothelial cell-cell junctions. This is Rap guanine nucleotide exchange factor 2 (RAPGEF2) from Canis lupus familiaris (Dog).